Consider the following 843-residue polypeptide: Eisosome protein 1 (843 aa).

Ser-2 is subject to N-acetylserine. Ser-2 carries the phosphoserine modification. The tract at residues 13 to 44 (HNIGKTSGGGSRTSSITSSKKSLKHGSKSLRK) is disordered. The segment covering 33–44 (KSLKHGSKSLRK) has biased composition (basic residues). Ser-88 and Ser-130 each carry phosphoserine. Residues 120-174 (KMGPKVVRNNSITSATSKTSKESQTKRKSKESPGAAASKAYSMTMETTSLSSQTN) form a disordered region. Polar residues-rich tracts occupy residues 127 to 137 (RNNSITSATSK) and 163 to 174 (TMETTSLSSQTN). Ser-182, Ser-401, Ser-584, and Ser-710 each carry phosphoserine. Positions 717–843 (DLPTQLEKIE…QDAISNQEKK (127 aa)) are disordered. Thr-720 is modified (phosphothreonine). Residues 752–764 (STAAKEATETSSA) are compositionally biased toward low complexity. Phosphoserine occurs at positions 763 and 775. Basic and acidic residues predominate over residues 781-797 (SGKEDANDCKSAEHSKE). Polar residues predominate over residues 798–810 (ISVSQKAGNNKSL). A phosphoserine mark is found at Ser-816, Ser-828, Ser-829, and Ser-838.

This sequence belongs to the EIS1 family.

It is found in the cytoplasmic granule. The protein localises to the cell membrane. Required for normal formation of eisosomes, large cytoplasmic protein assemblies that localize to specialized domains on plasma membrane and mark the site of endocytosis. This chain is Eisosome protein 1 (EIS1), found in Saccharomyces cerevisiae (strain RM11-1a) (Baker's yeast).